A 353-amino-acid polypeptide reads, in one-letter code: Protein CYTOKININ-RESPONSIVE GATA TRANSCRIPTION FACTOR 1 (353 aa).

Residues 137-144 carry the Nuclear localization signal 1 motif; that stretch reads IRKGAATD. The tract at residues 142–166 is disordered; that stretch reads ATDPEGGAVRKPRRRAQAHQDESQQ. Residues 178–203 form a GATA-type zinc finger; that stretch reads CSDCNTTKTPLWRSGPCGPKSLCNAC. The Nuclear localization signal 2 signature appears at 244-251; the sequence is EKRAADVD.

The protein belongs to the type IV zinc-finger family. Class B subfamily. Mostly expressed in leaves and stems, and, at low levels, in roots.

Its subcellular location is the nucleus. Its function is as follows. Transcriptional regulator that specifically binds 5'-GATA-3' or 5'-GAT-3' motifs within gene promoters. Influences the expression of nuclear encoded chloroplast-targeted genes. Regulates chloroplast development and promotes chlorophyll accumulation. Modulates plant architecture (e.g. height, length and width of leaf blades, and flowering tillers production) and represses tillering, probably by modulating number of cells. Promotes senescence. Involved in grain filling, panicle development and starch production. The protein is Protein CYTOKININ-RESPONSIVE GATA TRANSCRIPTION FACTOR 1 of Oryza sativa subsp. japonica (Rice).